We begin with the raw amino-acid sequence, 53 residues long: Rubredoxin (53 aa).

One can recognise a Rubredoxin-like domain in the interval 1–52 (MAKWRCKICGYIYDEDEGDPDNGISPGTKFEDLPDDWVCPLCGAPKSEFERI). Residues Cys6, Cys9, Cys39, and Cys42 each coordinate Fe cation.

Belongs to the rubredoxin family. Fe(3+) serves as cofactor.

Rubredoxin is a small nonheme, iron protein lacking acid-labile sulfide. Its single Fe, chelated to 4 Cys, functions as an electron acceptor and may also stabilize the conformation of the molecule. The protein is Rubredoxin (rub) of Pyrococcus abyssi (strain GE5 / Orsay).